Consider the following 293-residue polypeptide: Elongation factor Ts (293 aa).

The tract at residues 80–83 is involved in Mg(2+) ion dislocation from EF-Tu; the sequence is TDFV.

It belongs to the EF-Ts family.

It localises to the cytoplasm. Its function is as follows. Associates with the EF-Tu.GDP complex and induces the exchange of GDP to GTP. It remains bound to the aminoacyl-tRNA.EF-Tu.GTP complex up to the GTP hydrolysis stage on the ribosome. This Burkholderia pseudomallei (strain 1106a) protein is Elongation factor Ts.